A 140-amino-acid chain; its full sequence is Large ribosomal subunit protein uL14 (140 aa).

It belongs to the universal ribosomal protein uL14 family.

This chain is Large ribosomal subunit protein uL14 (rpl-23), found in Caenorhabditis elegans.